Reading from the N-terminus, the 329-residue chain is Protein Brevis radix-like 4 (329 aa).

The interval 12 to 37 (SGTSRHHGQQRRGGSPPPRGRTTSVY) is disordered. Positions 86 to 142 (REWVAQVEPGVQITFVSLAGGGGNDLKRIRFSREMYDKWQAQKWWGENNERIMELYN) constitute a BRX 1 domain. The interval 151–263 (LPTPPRSDDG…TTSCSSRDEV (113 aa)) is disordered. 2 stretches are compositionally biased toward low complexity: residues 222 to 236 (SNPS…QQPQ) and 243 to 252 (AAASDAMDAA). Residues 253-263 (RTTSCSSRDEV) show a composition bias toward polar residues. The 56-residue stretch at 274–329 (TEWVIQDEPGVYITVRELADGTRELRRVRFSRERFAELNAKLWWEENKERIQAQYL) folds into the BRX 2 domain.

Belongs to the BRX family.

It is found in the nucleus. The chain is Protein Brevis radix-like 4 (BRXL4) from Oryza sativa subsp. japonica (Rice).